The primary structure comprises 514 residues: Peptide chain release factor 3 (514 aa).

The region spanning 8–268 is the tr-type G domain; sequence KKRRTFAIIS…IFLKFAPEPH (261 aa). Residues 17 to 24, 85 to 89, and 139 to 142 each bind GTP; these read SHPDAGKT, DTPGH, and NKLD.

Belongs to the TRAFAC class translation factor GTPase superfamily. Classic translation factor GTPase family. PrfC subfamily.

The protein localises to the cytoplasm. Increases the formation of ribosomal termination complexes and stimulates activities of RF-1 and RF-2. It binds guanine nucleotides and has strong preference for UGA stop codons. It may interact directly with the ribosome. The stimulation of RF-1 and RF-2 is significantly reduced by GTP and GDP, but not by GMP. This is Peptide chain release factor 3 from Streptococcus pneumoniae serotype 2 (strain D39 / NCTC 7466).